A 298-amino-acid polypeptide reads, in one-letter code: Inosose dehydratase (298 aa).

The protein belongs to the IolE/MocC family. The cofactor is glutathione. Co(2+) serves as cofactor. Mn(2+) is required as a cofactor.

It carries out the reaction scyllo-inosose = 3D-3,5/4-trihydroxycyclohexane-1,2-dione + H2O. It functions in the pathway polyol metabolism; myo-inositol degradation into acetyl-CoA; acetyl-CoA from myo-inositol: step 2/7. Its function is as follows. Catalyzes the dehydration of inosose (2-keto-myo-inositol, 2KMI or 2,4,6/3,5-pentahydroxycyclohexanone) to 3D-(3,5/4)-trihydroxycyclohexane-1,2-dione (D-2,3-diketo-4-deoxy-epi-inositol). In Clostridium beijerinckii (strain ATCC 51743 / NCIMB 8052) (Clostridium acetobutylicum), this protein is Inosose dehydratase.